The primary structure comprises 209 residues: Abscisic acid receptor PYL5 (209 aa).

Residues 44–196 (HAPGEHQCSS…NLTSLAEVSE (153 aa)) form an START-like region. An intrachain disulfide couples C51 to C177. Abscisate is bound by residues K80, 109–114 (ATTSTE), 136–142 (RLRNYSS), and E161. The Gate loop signature appears at 105-109 (TGLPA). Positions 135-137 (HRL) match the Latch loop motif.

The protein belongs to the PYR/PYL/RCAR abscisic acid intracellular receptor family. In terms of assembly, monomer. Interacts with PP2C30. Binding to PP2C30 is dependent on the presence of abscisic acid (ABA). Interacts with PP2C51. Binding to PP2C51 is dependent on the presence of ABA. Interacts with PP2C50. Binding to PP2C50 is dependent on the presence of ABA. Interacts with PP2C53. In terms of tissue distribution, expressed in leaf sheaths and leaf blades. Expressed at low levels in roots, flowers and seeds.

It is found in the nucleus. The protein resides in the cytoplasm. The protein localises to the cytosol. Intracellular abscisic acid (ABA) receptor that functions as a positive regulator of ABA signaling pathway. Together with ABI5, PP2C30 and SAPK2, is part of an ABA signaling unit that modulates seed germination and early seedling growth. Acts as a positive regulator of abiotic stress-responsive gene expression. Inhibits the protein phosphatases PP2C06 and PP2C09 when activated by ABA. The protein is Abscisic acid receptor PYL5 of Oryza sativa subsp. japonica (Rice).